The following is a 326-amino-acid chain: Ribosomal large subunit pseudouridine synthase D (326 aa).

The 74-residue stretch at 18–91 folds into the S4 RNA-binding domain; that stretch reads QRLDQALAEM…IPLDIVYEDE (74 aa). Asp-139 is an active-site residue.

It belongs to the pseudouridine synthase RluA family. As to quaternary structure, in late stage pre-50S ribosomal subunit interacts with ObgE and DarP(YjgA).

It is found in the cytoplasm. It catalyses the reaction uridine(1911/1915/1917) in 23S rRNA = pseudouridine(1911/1915/1917) in 23S rRNA. In terms of biological role, responsible for synthesis of pseudouridine from uracil at positions 1911, 1915 and 1917 in 23S ribosomal RNA. Other positions are not modified. Uridine isomerization occurs as a late step during the assembly of the large ribosomal subunit. Member of a network of 50S ribosomal subunit biogenesis factors (ObgE, RluD, RsfS and DarP(YjgA)) which assembles along the 30S-50S interface, allowing 23S rRNA modification and preventing incorrect 23S rRNA structures from forming. The chain is Ribosomal large subunit pseudouridine synthase D from Escherichia coli (strain K12).